Reading from the N-terminus, the 376-residue chain is DnaJ homolog subfamily B member 12 (376 aa).

Methionine 1 is modified (N-acetylmethionine). The interval alanine 45–serine 97 is disordered. Over residues threonine 57–glycine 84 the composition is skewed to low complexity. The 65-residue stretch at aspartate 111–glycine 175 folds into the J domain. At histidine 186 the chain carries Pros-methylhistidine. Residues glycine 243–leucine 263 form a helical membrane-spanning segment.

This sequence belongs to the DnaJ family. DNAJB12/DNAJB14 subfamily. In terms of assembly, homodimer and homotetramer. Interacts (via J domain) with HSPA8/Hsc70. Forms a multiprotein complex, at least composed of DNAJB12, DNAJB14, HSPA8/Hsc70 and SGTA; interaction with DNAJB14 and HSPA8/Hsc70 is direct. Methylated at His-186 by METTL9.

The protein localises to the endoplasmic reticulum membrane. The protein resides in the nucleus membrane. In terms of biological role, acts as a co-chaperone with HSPA8/Hsc70; required to promote protein folding and trafficking, prevent aggregation of client proteins, and promote unfolded proteins to endoplasmic reticulum-associated degradation (ERAD) pathway. Acts by determining HSPA8/Hsc70's ATPase and polypeptide-binding activities. Can also act independently of HSPA8/Hsc70: together with DNAJB14, acts as a chaperone that promotes maturation of potassium channels KCND2 and KCNH2 by stabilizing nascent channel subunits and assembling them into tetramers. While stabilization of nascent channel proteins is dependent on HSPA8/Hsc70, the process of oligomerization of channel subunits is independent of HSPA8/Hsc70. When overexpressed, forms membranous structures together with DNAJB14 and HSPA8/Hsc70 within the nucleus; the role of these structures, named DJANGOs, is still unclear. In Mus musculus (Mouse), this protein is DnaJ homolog subfamily B member 12.